We begin with the raw amino-acid sequence, 305 residues long: HTH-type transcriptional activator BauR (305 aa).

An HTH lysR-type domain is found at 15–72; sequence FDIRLLRIFKTIVECGSFSAAESTLGLSRSAISLHMGDLEKRLGMRLCQRGRAGFALT.

This sequence belongs to the LysR transcriptional regulatory family.

Functionally, involved in the degradation of beta-alanine. BauR activates the transcription of the bauABCD operon. The protein is HTH-type transcriptional activator BauR (bauR) of Pseudomonas aeruginosa (strain ATCC 15692 / DSM 22644 / CIP 104116 / JCM 14847 / LMG 12228 / 1C / PRS 101 / PAO1).